The primary structure comprises 350 residues: MLISQRPTLSEDVLAENRSQFVIEPLEPGFGYTLGNSLRRTLLSSIPGAAVTSIRIDGVLHEFTTVPGVKEDVTDIILNLKGLVVSSEEDEPVTMYLRKQGPGEVTAGDIVPPAGVTVHNPDMHIATLNDKGKLEVELVVERGRGYVPAVQNKASGAEIGRIPVDSIYSPVLKVTYKVEATRVEQRTDFDKLILDVETKNSITPRDALASAGKTLVELFGLARELNVEAEGIEIGPSPAEADQAAHFALPIDDLDLTVRSYNCLKREGVHTVGELVARTESDLLDIRNFGQKSIDEVKIKLHQLGLSLKDSPASFDPSEVAGYDVATGTWNSDAGYDLEDNQDYAETEQL.

The segment at 1 to 226 (MLISQRPTLS…ELFGLARELN (226 aa)) is alpha N-terminal domain (alpha-NTD). The tract at residues 241 to 350 (ADQAAHFALP…NQDYAETEQL (110 aa)) is alpha C-terminal domain (alpha-CTD). The disordered stretch occupies residues 328–350 (GTWNSDAGYDLEDNQDYAETEQL). Residues 336–350 (YDLEDNQDYAETEQL) show a composition bias toward acidic residues.

Belongs to the RNA polymerase alpha chain family. Homodimer. The RNAP catalytic core consists of 2 alpha, 1 beta, 1 beta' and 1 omega subunit. When a sigma factor is associated with the core the holoenzyme is formed, which can initiate transcription.

It catalyses the reaction RNA(n) + a ribonucleoside 5'-triphosphate = RNA(n+1) + diphosphate. DNA-dependent RNA polymerase catalyzes the transcription of DNA into RNA using the four ribonucleoside triphosphates as substrates. This is DNA-directed RNA polymerase subunit alpha from Mycolicibacterium vanbaalenii (strain DSM 7251 / JCM 13017 / BCRC 16820 / KCTC 9966 / NRRL B-24157 / PYR-1) (Mycobacterium vanbaalenii).